A 152-amino-acid polypeptide reads, in one-letter code: UPF0719 transmembrane protein MT2674.1 (152 aa).

The next 4 membrane-spanning stretches (helical) occupy residues V21–V41, V62–A82, I92–L112, and P131–L151.

Belongs to the UPF0719 family.

Its subcellular location is the cell membrane. The chain is UPF0719 transmembrane protein MT2674.1 from Mycobacterium tuberculosis (strain CDC 1551 / Oshkosh).